Consider the following 748-residue polypeptide: Catalase-peroxidase (748 aa).

Positions 92-238 (WHSAGTYRIG…LAAVQMGLIY (147 aa)) form a cross-link, tryptophyl-tyrosyl-methioninium (Trp-Tyr) (with M-264). The active-site Proton acceptor is the H93. The tryptophyl-tyrosyl-methioninium (Tyr-Met) (with W-92) cross-link spans 238-264 (YVNPEGPDGNPDPIASARDIRDTFARM). Heme b is bound at residue H279.

It belongs to the peroxidase family. Peroxidase/catalase subfamily. As to quaternary structure, homodimer or homotetramer. Heme b serves as cofactor. In terms of processing, formation of the three residue Trp-Tyr-Met cross-link is important for the catalase, but not the peroxidase activity of the enzyme.

The enzyme catalyses H2O2 + AH2 = A + 2 H2O. It catalyses the reaction 2 H2O2 = O2 + 2 H2O. Bifunctional enzyme with both catalase and broad-spectrum peroxidase activity. The polypeptide is Catalase-peroxidase (Xanthomonas axonopodis pv. citri (strain 306)).